The following is a 544-amino-acid chain: Chaperonin GroEL 2 (544 aa).

Residues 29 to 32 (TLGP), 86 to 90 (DGTTT), glycine 413, 482 to 484 (NVL), and aspartate 498 each bind ATP.

The protein belongs to the chaperonin (HSP60) family. As to quaternary structure, forms a cylinder of 14 subunits composed of two heptameric rings stacked back-to-back. Interacts with the co-chaperonin GroES.

It localises to the cytoplasm. It carries out the reaction ATP + H2O + a folded polypeptide = ADP + phosphate + an unfolded polypeptide.. In terms of biological role, together with its co-chaperonin GroES, plays an essential role in assisting protein folding. The GroEL-GroES system forms a nano-cage that allows encapsulation of the non-native substrate proteins and provides a physical environment optimized to promote and accelerate protein folding. This chain is Chaperonin GroEL 2, found in Roseiflexus sp. (strain RS-1).